Reading from the N-terminus, the 123-residue chain is Prostate stem cell antigen (123 aa).

An N-terminal signal peptide occupies residues 1 to 20; the sequence is MKTVFFLLLATYLALHPGAA. Positions 21-95 constitute a UPAR/Ly6 domain; the sequence is LQCYSCTAQM…CCYSDLCNVN (75 aa). 5 cysteine pairs are disulfide-bonded: cysteine 23–cysteine 48, cysteine 26–cysteine 35, cysteine 41–cysteine 66, cysteine 70–cysteine 86, and cysteine 87–cysteine 92. A glycan (N-linked (GlcNAc...) asparagine) is linked at asparagine 40. Asparagine 95 carries the GPI-anchor amidated asparagine lipid modification. A propeptide spans 96-123 (removed in mature form); it reads GAHTLKPPTTLGLLTVLCSLLLWGSSRL.

As to quaternary structure, interacts with CHRNA4. As to expression, predominantly expressed in prostate. Also found in spleen, liver, lung, prostate, kidney and testis. Expressed in brain cortex; expression is increased in transgenic mouse model of Alzheimer disease (at protein level).

It is found in the cell membrane. In terms of biological role, may be involved in the regulation of cell proliferation. Functionally, may act as a modulator of nicotinic acetylcholine receptors (nAChRs) activity. In vitro inhibits nicotine-induced signaling probably implicating alpha-3:beta-2- or alpha-7-containing nAChRs. The protein is Prostate stem cell antigen (Psca) of Mus musculus (Mouse).